The chain runs to 239 residues: tRNA (guanine-N(7)-)-methyltransferase (239 aa).

Residues E69, E94, D121, and D144 each contribute to the S-adenosyl-L-methionine site. The active site involves D144. K148 provides a ligand contact to substrate. The interaction with RNA stretch occupies residues 150–155 (RHNKRR). Substrate-binding positions include D180 and 217–220 (TKFE).

This sequence belongs to the class I-like SAM-binding methyltransferase superfamily. TrmB family. As to quaternary structure, monomer.

The catalysed reaction is guanosine(46) in tRNA + S-adenosyl-L-methionine = N(7)-methylguanosine(46) in tRNA + S-adenosyl-L-homocysteine. The protein operates within tRNA modification; N(7)-methylguanine-tRNA biosynthesis. Its function is as follows. Catalyzes the formation of N(7)-methylguanine at position 46 (m7G46) in tRNA. This chain is tRNA (guanine-N(7)-)-methyltransferase, found in Cronobacter sakazakii (strain ATCC BAA-894) (Enterobacter sakazakii).